Reading from the N-terminus, the 248-residue chain is Inner membrane protein pE248R (248 aa).

A lipid anchor (N-myristoyl glycine; by host) is attached at glycine 2. The Cytoplasmic portion of the chain corresponds to 2 to 199; sequence GGSTSKNSFK…ADAISAVFKN (198 aa). A helical membrane pass occupies residues 200–220; that stretch reads IMVAAVVIVLIIVGFIAVFYF. Topologically, residues 221-248 are extracellular; that stretch reads LHSRHRHEEEEEAEPLISNKVLKNAAVS.

This sequence belongs to the asfivirus E248R family. As to quaternary structure, interacts with A151R.

It is found in the host membrane. The protein resides in the virion membrane. Essential for viral fusion with host endosomal membrane and core release. This chain is Inner membrane protein pE248R, found in African swine fever virus (strain Badajoz 1971 Vero-adapted) (Ba71V).